A 593-amino-acid polypeptide reads, in one-letter code: Meiosis-specific APC/C activator protein AMA1 (593 aa).

Residues 1–11 are compositionally biased toward basic residues; the sequence is MATPHLYHRYN. Residues 1-26 are disordered; that stretch reads MATPHLYHRYNSKSSNKNINSSGNST. The span at 12–25 shows a compositional bias: low complexity; the sequence is SKSSNKNINSSGNS. The short motif at 29-35 is the C-box element; it reads DRFIPKS. Residues 94-109 show a composition bias toward low complexity; it reads SSISSSSESQVTRSGS. The tract at residues 94 to 125 is disordered; it reads SSISSSSESQVTRSGSARASRNDYSKLTKEQK. Residues 113 to 125 show a composition bias toward basic and acidic residues; it reads SRNDYSKLTKEQK. 6 WD repeats span residues 226–264, 271–310, 323–364, 388–427, 432–474, and 525–564; these read RNDFYSNLISWSRTTNNVLVGLGCSVYIWSEKEGAVSIL, EKRDLVTCVSFCPYNTYFIVGTKFGRILLYDQKEFFHSSN, ESFK…FPIK, AQAQQVCGISLNEHANLLAVGGNDNSCSLWDISDLDKPIK, PHKA…LLDE, and PNPLRVLSAVISPSSMAICVATNDETIRFYELWNDKEEII.

It belongs to the WD repeat CDC20/Fizzy family. Interacts with CDC16.

In terms of biological role, activator protein that regulates the ubiquitin ligase activity and substrate specificity of the anaphase promoting complex/cyclosome (APC/C). Required for the ubiquitination and subsequent degradation of the B-type cyclin CLB1 by the APC/C complex during meiosis. Required for meiosis I, late meiotic gene expression and spore wall assembly. This is Meiosis-specific APC/C activator protein AMA1 (AMA1) from Saccharomyces cerevisiae (strain ATCC 204508 / S288c) (Baker's yeast).